We begin with the raw amino-acid sequence, 260 residues long: uncharacterized protein (260 aa).

The N-terminal stretch at Met1–Gly22 is a signal peptide. Residue Cys23 is the site of N-palmitoyl cysteine attachment. Cys23 carries S-diacylglycerol cysteine lipidation.

The protein belongs to the staphylococcal tandem lipoprotein family.

Its subcellular location is the cell membrane. This is an uncharacterized protein from Staphylococcus aureus (strain MRSA252).